The following is a 408-amino-acid chain: Multidrug resistance protein MdtG (408 aa).

10 helical membrane passes run 16-36, 58-78, 92-112, 115-135, 146-166, 173-193, 224-244, 256-276, 290-310, and 378-398; these read LIVAWLGCFLTGAAFSLVMPF, IVFSITFLFSAIASPFWGGLA, LGMGIVMVLMGLAQNIWQFLI, ALLGLLGGFVPNANALIATQV, TLSTGGVSGALLGPMAGGLLA, PVFFITASVLILCFFVTLFCI, LFVTTLIIQVATGSIAPILTL, VAFISGMIASVPGVAALLSAP, ILITALIFSVLLLIPMSYVQT, and AVFLVTAGVVLFNAVYSWNSL.

The protein belongs to the major facilitator superfamily. DHA1 family. MdtG (TC 2.A.1.2.20) subfamily.

The protein localises to the cell inner membrane. Its function is as follows. Confers resistance to fosfomycin and deoxycholate. The protein is Multidrug resistance protein MdtG of Escherichia coli O17:K52:H18 (strain UMN026 / ExPEC).